Reading from the N-terminus, the 613-residue chain is Probable potassium transport system protein Kup 1 (613 aa).

12 helical membrane passes run 40-60 (VLSMLFWSMTLVVSIKYVVFV), 93-113 (MLLGLLGASMFYGDAVITPAI), 127-147 (PALQPWVLPLSLIVLVGLFLL), 158-178 (LFGPVMLFWFVLLGLIGLFSV), 201-221 (AVQAFIVFGSVFLALTGAEAL), 237-257 (WFYIAMPCLLLNYFGQGALLL), 266-286 (PFFLLMPTWAVAPTIVLATAA), 288-308 (VIASQAVISGAFSMTAQAVHL), 327-347 (IYVPVVNYALLLLVVAVVLAF), 356-376 (AYGIAVTTTMLLTTGLVTVVM), 384-404 (LPAVALLGTVFLAVDLSFFGA), and 409-429 (VAAGGWFPLLLGGLIFFLMVT).

This sequence belongs to the HAK/KUP transporter (TC 2.A.72) family.

The protein localises to the cell inner membrane. It carries out the reaction K(+)(in) + H(+)(in) = K(+)(out) + H(+)(out). Transport of potassium into the cell. Likely operates as a K(+):H(+) symporter. This is Probable potassium transport system protein Kup 1 from Ralstonia nicotianae (strain ATCC BAA-1114 / GMI1000) (Ralstonia solanacearum).